The following is a 354-amino-acid chain: Probable L-ascorbate-6-phosphate lactonase UlaG (354 aa).

Belongs to the UlaG family. The cofactor is a divalent metal cation.

Its subcellular location is the cytoplasm. The enzyme catalyses L-ascorbate 6-phosphate + H2O = 3-dehydro-L-gulonate 6-phosphate. The protein operates within cofactor degradation; L-ascorbate degradation; D-xylulose 5-phosphate from L-ascorbate: step 1/4. Its function is as follows. Probably catalyzes the hydrolysis of L-ascorbate-6-P into 3-keto-L-gulonate-6-P. Is essential for L-ascorbate utilization under anaerobic conditions. The sequence is that of Probable L-ascorbate-6-phosphate lactonase UlaG from Salmonella heidelberg (strain SL476).